Consider the following 358-residue polypeptide: 4-hydroxy-3-methylbut-2-en-1-yl diphosphate synthase (flavodoxin) (358 aa).

Residues Cys264, Cys267, Cys299, and Glu306 each contribute to the [4Fe-4S] cluster site.

Belongs to the IspG family. The cofactor is [4Fe-4S] cluster.

The enzyme catalyses (2E)-4-hydroxy-3-methylbut-2-enyl diphosphate + oxidized [flavodoxin] + H2O + 2 H(+) = 2-C-methyl-D-erythritol 2,4-cyclic diphosphate + reduced [flavodoxin]. Its pathway is isoprenoid biosynthesis; isopentenyl diphosphate biosynthesis via DXP pathway; isopentenyl diphosphate from 1-deoxy-D-xylulose 5-phosphate: step 5/6. Functionally, converts 2C-methyl-D-erythritol 2,4-cyclodiphosphate (ME-2,4cPP) into 1-hydroxy-2-methyl-2-(E)-butenyl 4-diphosphate. The sequence is that of 4-hydroxy-3-methylbut-2-en-1-yl diphosphate synthase (flavodoxin) from Helicobacter acinonychis (strain Sheeba).